The chain runs to 208 residues: Thymidylate kinase (208 aa).

10-17 (GPEGSGKT) serves as a coordination point for ATP.

It belongs to the thymidylate kinase family.

It carries out the reaction dTMP + ATP = dTDP + ADP. In terms of biological role, phosphorylation of dTMP to form dTDP in both de novo and salvage pathways of dTTP synthesis. The polypeptide is Thymidylate kinase (Bacillus cereus (strain 03BB102)).